The primary structure comprises 147 residues: UPAR/Ly6 domain-containing protein CG9338 (147 aa).

The first 23 residues, 1–23, serve as a signal peptide directing secretion; sequence MVSSVKMILALTVLATVACTGYA. The Extracellular segment spans residues 24–126; that stretch reads IKCYQCDSLT…VCTEDECNGT (103 aa). Disulfide bonds link Cys26-Cys72, Cys29-Cys37, Cys51-Cys89, Cys101-Cys115, and Cys118-Cys123. The N-linked (GlcNAc...) asparagine glycan is linked to Asn68. Residue Asn124 is the site of GPI-anchor amidated asparagine attachment. The propeptide at 125–147 is removed in mature form; that stretch reads GTSSLAPIAGVILLFFGLARLLA. A helical transmembrane segment spans residues 127–147; the sequence is SSLAPIAGVILLFFGLARLLA.

It belongs to the quiver family.

The protein resides in the cell membrane. Its function is as follows. May be involved in regulating neuron excitability. In Drosophila melanogaster (Fruit fly), this protein is UPAR/Ly6 domain-containing protein CG9338.